The primary structure comprises 718 residues: Cyclomaltodextrin glucanotransferase (718 aa).

A signal peptide spans 1–34; it reads MFQMAKRAFLSTTLTLGLLAGSALPFLPASAVYA. The segment at 35 to 172 is A1; it reads DPDTAVTNKQ…GIKIVIDFAP (138 aa). Residues Asp-61, Asn-63, Asn-66, and Asn-67 each coordinate Ca(2+). A disulfide bond links Cys-77 and Cys-84. The Ca(2+) site is built by Gly-85 and Asp-87. 134–135 provides a ligand contact to substrate; sequence YW. Asn-173 lines the Ca(2+) pocket. The segment at 173–236 is b; sequence NHTSPAMETD…NLYDLADFNH (64 aa). His-174 contacts substrate. Position 224 (Ile-224) interacts with Ca(2+). Substrate is bound by residues 227 to 230 and Asp-230; that span reads NLYD. Residue Asp-233 participates in Ca(2+) binding. The tract at residues 237 to 440 is A2; sequence NNATIDKYFK…LRKSNPAIAY (204 aa). Arg-261 lines the substrate pocket. The active-site Nucleophile is the Asp-263. Substrate-binding positions include 266–267 and His-267; that span reads KH. His-267 contacts Ca(2+). The Proton donor role is filled by Glu-291. The substrate site is built by His-361, Asp-405, and Arg-409. Residues 441-528 are c; it reads GSTQQRWINN…ATAVWQYTTA (88 aa). The interval 529 to 614 is d; sequence ETTPTIGHVG…SNAYNNFTIL (86 aa). An IPT/TIG domain is found at 532–612; the sequence is PTIGHVGPVM…VNSNAYNNFT (81 aa). One can recognise a CBM20 domain in the interval 613-718; sequence ILTGDQVTVR…GTATVTVNWQ (106 aa). Residues 615 to 718 form an e region; it reads TGDQVTVRFV…GTATVTVNWQ (104 aa).

The protein belongs to the glycosyl hydrolase 13 family. In terms of assembly, monomer. Ca(2+) serves as cofactor.

The protein resides in the secreted. The catalysed reaction is Cyclizes part of a (1-&gt;4)-alpha-D-glucan chain by formation of a (1-&gt;4)-alpha-D-glucosidic bond.. In Niallia circulans (Bacillus circulans), this protein is Cyclomaltodextrin glucanotransferase.